The sequence spans 133 residues: Small ribosomal subunit protein uS19 (133 aa).

The protein belongs to the universal ribosomal protein uS19 family. In terms of assembly, part of the 30S ribosomal subunit.

Functionally, protein S19 forms a complex with S13 that binds strongly to the 16S ribosomal RNA. In Thermococcus kodakarensis (strain ATCC BAA-918 / JCM 12380 / KOD1) (Pyrococcus kodakaraensis (strain KOD1)), this protein is Small ribosomal subunit protein uS19.